The following is a 215-amino-acid chain: UPF0502 protein YceH (215 aa).

The protein belongs to the UPF0502 family.

The protein is UPF0502 protein YceH of Salmonella schwarzengrund (strain CVM19633).